We begin with the raw amino-acid sequence, 134 residues long: T-cell receptor alpha chain V region RL-5 (134 aa).

The N-terminal stretch at 1–20 is a signal peptide; the sequence is MFSASCSVTVVVLLITVRRT. The v segment stretch occupies residues 21–114; that stretch reads NGASVTQTEG…DSAVYYCALR (94 aa). A j segment region spans residues 115-134; sequence RGASNKLTLGTGTLLKVELN. N134 carries an N-linked (GlcNAc...) asparagine glycan.

In terms of processing, rearrangement with the C region would elongate the sequence with Ile-Thr-; which creates a potential N-glycosylation site at Asn-134.

In Oryctolagus cuniculus (Rabbit), this protein is T-cell receptor alpha chain V region RL-5.